The chain runs to 505 residues: 2-isopropylmalate synthase (505 aa).

The Pyruvate carboxyltransferase domain maps to 5–267 (VYIFDTTLRD…YTNIKTEEIY (263 aa)). Asp14, His202, His204, and Asn238 together coordinate Mn(2+). A regulatory domain region spans residues 391-505 (TLEYLHISSG…VNKLIWDSQK (115 aa)).

The protein belongs to the alpha-IPM synthase/homocitrate synthase family. LeuA type 1 subfamily. Homodimer. Requires Mn(2+) as cofactor.

It is found in the cytoplasm. The catalysed reaction is 3-methyl-2-oxobutanoate + acetyl-CoA + H2O = (2S)-2-isopropylmalate + CoA + H(+). The protein operates within amino-acid biosynthesis; L-leucine biosynthesis; L-leucine from 3-methyl-2-oxobutanoate: step 1/4. Its function is as follows. Catalyzes the condensation of the acetyl group of acetyl-CoA with 3-methyl-2-oxobutanoate (2-ketoisovalerate) to form 3-carboxy-3-hydroxy-4-methylpentanoate (2-isopropylmalate). The polypeptide is 2-isopropylmalate synthase (Pelotomaculum thermopropionicum (strain DSM 13744 / JCM 10971 / SI)).